We begin with the raw amino-acid sequence, 158 residues long: Phosphopantetheine adenylyltransferase (158 aa).

Thr-10 serves as a coordination point for substrate. ATP is bound by residues 10 to 11 (TF) and His-18. Residues Lys-42, Leu-74, and Arg-88 each coordinate substrate. ATP contacts are provided by residues 89–91 (GLR), Glu-99, and 124–130 (NSFISST).

The protein belongs to the bacterial CoaD family. Homohexamer. Mg(2+) is required as a cofactor.

The protein localises to the cytoplasm. The catalysed reaction is (R)-4'-phosphopantetheine + ATP + H(+) = 3'-dephospho-CoA + diphosphate. Its pathway is cofactor biosynthesis; coenzyme A biosynthesis; CoA from (R)-pantothenate: step 4/5. Functionally, reversibly transfers an adenylyl group from ATP to 4'-phosphopantetheine, yielding dephospho-CoA (dPCoA) and pyrophosphate. In Shewanella loihica (strain ATCC BAA-1088 / PV-4), this protein is Phosphopantetheine adenylyltransferase.